A 321-amino-acid polypeptide reads, in one-letter code: Cyclic AMP-AMP-AMP synthase (321 aa).

Residue Lys-63 coordinates ATP. Residues Asp-72 and Asp-74 each coordinate Mg(2+). Residues Asp-74, His-162, Lys-185, 201 to 203, and Asn-270 contribute to the ATP site; that span reads KSF.

The protein belongs to the CD-NTase family. A01 subfamily. In terms of assembly, forms complexes with Cap7 with 1:1 and 2:2 stoichimetry, and a 1:1:6 CdnC:Cap7:Cap6 complex. The cofactor is Mg(2+).

It carries out the reaction 3 ATP = 3',3',3'-c-tri-AMP + 3 diphosphate. The enzyme catalyses 2 ATP = 3',3'-c-di-AMP + 2 diphosphate. The 2:2 CdnC:Cap7 (Cap7 is also called HORMA) complex is activated for cAAA synthesis by long dsDNA, but not 40 bp dsDNA or ssDNA; the 1:1 complex is inactive in vitro. The 2:2:DNA complex is catalytically disassembled and inactivated by Cap6 (also called Trip13). Its function is as follows. Cyclic nucleotide synthase (second messenger synthase) of a CBASS antivirus system. CBASS (cyclic oligonucleotide-based antiphage signaling system) provides immunity against bacteriophage. The CD-NTase protein synthesizes cyclic nucleotides in response to infection; these serve as specific second messenger signals. The signals activate a diverse range of effectors, leading to bacterial cell death and thus abortive phage infection. A type III-C(AAA) CBASS system. Cyclic nucleotide synthase that upon activation catalyzes the synthesis of 3',3',3'-cyclic AMP-AMP-AMP (3',3',3'-c-tri-AMP or cAAA) as the major product, and 3',3'-c-di-AMP as a minor product. Cannot use GTP as a substrate. In terms of biological role, protects E.coli strain JP313 against bacteriophage lambda cI- infection. When the cdnC-cap7-cap6-nucC operon is transformed into a susceptible strain it confers bacteriophage immunity. Mutations in the sensor (Cap7 also called HORMA) or effector proteins (CdnC, NucC) but not the disassembly protein (Cap6 also called Trip13) no longer confer immunity. The presence of the intact operon leads to culture collapse and cell death, which occurs before the phage has finished its replication cycle, thus protecting non-infected bacteria by aborting the phage infection and preventing its propagation. The chain is Cyclic AMP-AMP-AMP synthase from Escherichia coli (strain MS 115-1).